The chain runs to 657 residues: Autophagy-related protein 22 (657 aa).

Residues 1–15 are compositionally biased toward low complexity; that stretch reads MAPNLQPQPQSQLQR. The disordered stretch occupies residues 1–78; the sequence is MAPNLQPQPQ…VVPRHFGHDA (78 aa). The Cytoplasmic segment spans residues 1–91; the sequence is MAPNLQPQPQ…SRRELLGWYA (91 aa). Positions 26-40 are enriched in polar residues; it reads GLSNISKRSFRSCAT. Residues 92 to 112 traverse the membrane as a helical segment; sequence YAFAAETYVICGIASFIPILL. Residues 113-155 lie on the Vacuolar side of the membrane; that stretch reads ETLARENGVLVSDRKTPCGSSDSKNDGDGQCIVWVFGMEINTA. Residues 156 to 176 traverse the membrane as a helical segment; it reads SFAMYTFSVSVLVQALLVVSI. The Cytoplasmic portion of the chain corresponds to 177 to 187; the sequence is SCAADHGNYRK. The helical transmembrane segment at 188–208 threads the bilayer; it reads KLLLTFAWIGSFAVMSYIFIT. Residues 209 to 212 are Vacuolar-facing; that stretch reads KDNY. Residues 213 to 233 form a helical membrane-spanning segment; sequence ILGALLTVISNTSFGASFVLL. Over 234–317 the chain is Cytoplasmic; sequence NSFLPLLVRY…ELELSTRISA (84 aa). Residues 318–338 form a helical membrane-spanning segment; the sequence is IGIGTGYIAALFLQCICIGVL. Topologically, residues 339-349 are vacuolar; it reads ISLHNTTWGQR. The N-linked (GlcNAc...) asparagine glycan is linked to asparagine 343. A helical transmembrane segment spans residues 350–370; that stretch reads VVLFMVGVWWTVFTIPAAMWL. Residues 371–384 are Cytoplasmic-facing; sequence RPRPGPPLADNGRK. Residues 385–405 form a helical membrane-spanning segment; the sequence is GIMAGLAYILYAWKSLFKTIQ. At 406–409 the chain is on the vacuolar side; it reads QARR. A helical transmembrane segment spans residues 410–430; sequence LLDIVLFLAGWFLLSDAIATT. The Cytoplasmic segment spans residues 431–446; that stretch reads SSTAILFAKTQLHMKP. A helical transmembrane segment spans residues 447 to 467; it reads WALGMINVISTTAGVFGAFGW. Topologically, residues 468–481 are vacuolar; the sequence is SWVSRLFNLKAHQT. The helical transmembrane segment at 482-502 threads the bilayer; it reads ILVCIALFELIPLYGLLGYLP. The Cytoplasmic segment spans residues 503 to 515; sequence FVKNWGVFGLQQP. A helical membrane pass occupies residues 516–536; it reads WEMYPLAAVYGVVLGGLSGYC. Residues 537-554 are Vacuolar-facing; the sequence is RSLYGELIPPGSEAAFYA. A helical transmembrane segment spans residues 555–575; that stretch reads LYAITDKGSSVFGPTIVGAII. The Cytoplasmic portion of the chain corresponds to 576–583; it reads DRTGTIRP. Residues 584-604 form a helical membrane-spanning segment; the sequence is AFWFLAVLVGFPAPLIWFIDV. Topologically, residues 605-657 are vacuolar; it reads ERGRREGAKLAKSITDSIVQEEDESDDGAERRGMLSDYEREHGQSIDDERAGR. Positions 615–657 are disordered; the sequence is AKSITDSIVQEEDESDDGAERRGMLSDYEREHGQSIDDERAGR. The segment covering 632–657 has biased composition (basic and acidic residues); that stretch reads GAERRGMLSDYEREHGQSIDDERAGR.

It belongs to the ATG22 family.

The protein resides in the vacuole membrane. In terms of biological role, vacuolar effluxer which mediate the efflux of leucine and other amino acids resulting from autophagic degradation. The release of autophagic amino acids allows the maintenance of protein synthesis and viability during nitrogen starvation. Autophagy is required for proper vegetative growth, asexual/sexual reproduction, and full virulence. Autophagy is particularly involved in the biosynthesis of deoxynivalenol (DON), an important virulence determinant. This chain is Autophagy-related protein 22, found in Gibberella zeae (strain ATCC MYA-4620 / CBS 123657 / FGSC 9075 / NRRL 31084 / PH-1) (Wheat head blight fungus).